A 548-amino-acid polypeptide reads, in one-letter code: Chaperonin GroEL 3 (548 aa).

ATP is bound by residues 30 to 33 (TLGP), Lys51, 87 to 91 (DGTTT), Gly415, and Asp496.

This sequence belongs to the chaperonin (HSP60) family. As to quaternary structure, forms a cylinder of 14 subunits composed of two heptameric rings stacked back-to-back. Interacts with the co-chaperonin GroES.

The protein localises to the cytoplasm. It carries out the reaction ATP + H2O + a folded polypeptide = ADP + phosphate + an unfolded polypeptide.. Functionally, together with its co-chaperonin GroES, plays an essential role in assisting protein folding. The GroEL-GroES system forms a nano-cage that allows encapsulation of the non-native substrate proteins and provides a physical environment optimized to promote and accelerate protein folding. In Nitrobacter winogradskyi (strain ATCC 25391 / DSM 10237 / CIP 104748 / NCIMB 11846 / Nb-255), this protein is Chaperonin GroEL 3.